The following is a 192-amino-acid chain: Erythropoietin (192 aa).

The signal sequence occupies residues Met-1 to Cys-26. An intrachain disulfide couples Cys-33 to Cys-187. N-linked (GlcNAc...) asparagine glycans are attached at residues Asn-50, Asn-64, and Asn-109.

Belongs to the EPO/TPO family. In terms of tissue distribution, produced by kidney or liver of adult mammals and by liver of fetal or neonatal mammals.

Its subcellular location is the secreted. In terms of biological role, hormone involved in the regulation of erythrocyte proliferation and differentiation and the maintenance of a physiological level of circulating erythrocyte mass. Binds to EPOR leading to EPOR dimerization and JAK2 activation thereby activating specific downstream effectors, including STAT1 and STAT3. The chain is Erythropoietin (Epo) from Mus musculus (Mouse).